Reading from the N-terminus, the 53-residue chain is UPF0391 membrane protein Ent638_0536 (53 aa).

A run of 2 helical transmembrane segments spans residues 4 to 24 and 27 to 47; these read WGIIFLVIALIAAALGFGGLA and AAWAAKLVFVVGIVLFLVSLF.

Belongs to the UPF0391 family.

The protein resides in the cell membrane. This chain is UPF0391 membrane protein Ent638_0536, found in Enterobacter sp. (strain 638).